The chain runs to 1148 residues: Alpha-mannosidase 2 (1148 aa).

At 1 to 5 (MKLSR) the chain is on the cytoplasmic side. Residues 6 to 26 (QFTVFGSAIFCVVIFSLYLML) traverse the membrane as a helical; Signal-anchor for type II membrane protein segment. Over 27 to 1148 (DRGHLDYPRG…EISTSRIRLR (1122 aa)) the chain is Lumenal. Phosphoserine is present on residues Ser-80 and Ser-82. N-linked (GlcNAc...) asparagine glycosylation is present at Asn-93. 4 residues coordinate Zn(2+): His-174, Asp-176, Asp-288, and His-568. Asp-288 acts as the Nucleophile in catalysis. The tract at residues 1121 to 1148 (MHSPPDAQNTSEVSLSPMEISTSRIRLR) is disordered.

Belongs to the glycosyl hydrolase 38 family. As to quaternary structure, homodimer; disulfide-linked. The cofactor is Zn(2+). Glycosylated. As to expression, liver.

The protein resides in the golgi apparatus membrane. It catalyses the reaction N(4)-{beta-D-GlcNAc-(1-&gt;2)-alpha-D-Man-(1-&gt;3)-[alpha-D-Man-(1-&gt;3)-[alpha-D-Man-(1-&gt;6)]-alpha-D-Man-(1-&gt;6)]-beta-D-Man-(1-&gt;4)-beta-D-GlcNAc-(1-&gt;4)-beta-D-GlcNAc}-L-asparaginyl-[protein] + 2 H2O = 2 alpha-D-mannopyranose + an N(4)-{beta-D-GlcNAc-(1-&gt;2)-alpha-D-Man-(1-&gt;3)-[alpha-D-Man-(1-&gt;6)]-beta-D-Man-(1-&gt;4)-beta-D-GlcNAc-(1-&gt;4)-beta-D-GlcNAc}-L-asparaginyl-[protein]. Its pathway is protein modification; protein glycosylation. With respect to regulation, inhibited by swainsonine. Catalyzes the first committed step in the biosynthesis of complex N-glycans. It controls conversion of high mannose to complex N-glycans; the final hydrolytic step in the N-glycan maturation pathway. This chain is Alpha-mannosidase 2 (Man2a1), found in Rattus norvegicus (Rat).